A 388-amino-acid chain; its full sequence is Succinate--CoA ligase [ADP-forming] subunit beta (388 aa).

The ATP-grasp domain occupies 9-244; the sequence is KEILRKFGVA…LDEEDPAEIE (236 aa). Residues Lys-46, 53–55, Glu-99, Ala-102, and Glu-107 each bind ATP; that span reads GRG. Mg(2+)-binding residues include Asn-199 and Asp-213. Residues Asn-264 and 321 to 323 each bind substrate; that span reads GIM.

Belongs to the succinate/malate CoA ligase beta subunit family. As to quaternary structure, heterotetramer of two alpha and two beta subunits. It depends on Mg(2+) as a cofactor.

The enzyme catalyses succinate + ATP + CoA = succinyl-CoA + ADP + phosphate. It catalyses the reaction GTP + succinate + CoA = succinyl-CoA + GDP + phosphate. The protein operates within carbohydrate metabolism; tricarboxylic acid cycle; succinate from succinyl-CoA (ligase route): step 1/1. Its function is as follows. Succinyl-CoA synthetase functions in the citric acid cycle (TCA), coupling the hydrolysis of succinyl-CoA to the synthesis of either ATP or GTP and thus represents the only step of substrate-level phosphorylation in the TCA. The beta subunit provides nucleotide specificity of the enzyme and binds the substrate succinate, while the binding sites for coenzyme A and phosphate are found in the alpha subunit. This Burkholderia mallei (strain NCTC 10247) protein is Succinate--CoA ligase [ADP-forming] subunit beta.